Consider the following 454-residue polypeptide: Ribosomal protein uS12 methylthiotransferase RimO (454 aa).

Residues 9-124 (PKIGFVSLGC…VMDAVHLHMP (116 aa)) form the MTTase N-terminal domain. [4Fe-4S] cluster is bound by residues C18, C54, C83, C155, C159, and C162. Residues 141–382 (LTPKHFAYLK…MLLQEEISKK (242 aa)) enclose the Radical SAM core domain. The 70-residue stretch at 385 to 454 (QAKVGKTMRV…ADAHDLWAEA (70 aa)) folds into the TRAM domain.

This sequence belongs to the methylthiotransferase family. RimO subfamily. The cofactor is [4Fe-4S] cluster.

The protein localises to the cytoplasm. The enzyme catalyses L-aspartate(89)-[ribosomal protein uS12]-hydrogen + (sulfur carrier)-SH + AH2 + 2 S-adenosyl-L-methionine = 3-methylsulfanyl-L-aspartate(89)-[ribosomal protein uS12]-hydrogen + (sulfur carrier)-H + 5'-deoxyadenosine + L-methionine + A + S-adenosyl-L-homocysteine + 2 H(+). Functionally, catalyzes the methylthiolation of an aspartic acid residue of ribosomal protein uS12. The protein is Ribosomal protein uS12 methylthiotransferase RimO of Herminiimonas arsenicoxydans.